Reading from the N-terminus, the 459-residue chain is Cysteine--tRNA ligase (459 aa).

C29 contacts Zn(2+). The 'HIGH' region signature appears at 31 to 41 (MTVYDLCHLGH). Zn(2+)-binding residues include C213, H238, and E242. The 'KMSKS' region motif lies at 270 to 274 (KMSKS). ATP is bound at residue K273.

It belongs to the class-I aminoacyl-tRNA synthetase family. As to quaternary structure, monomer. Zn(2+) is required as a cofactor.

It is found in the cytoplasm. It catalyses the reaction tRNA(Cys) + L-cysteine + ATP = L-cysteinyl-tRNA(Cys) + AMP + diphosphate. The polypeptide is Cysteine--tRNA ligase (Variovorax paradoxus (strain S110)).